Reading from the N-terminus, the 262-residue chain is Vibriobactin-specific 2,3-dihydro-2,3-dihydroxybenzoate dehydrogenase (262 aa).

12–36 (LLVGSARGIGFSVLEHLLQAGAQVM) contributes to the NAD(+) binding site. Ser-145 contacts substrate. The active-site Proton acceptor is Tyr-158.

Belongs to the short-chain dehydrogenases/reductases (SDR) family.

It carries out the reaction (2S,3S)-2,3-dihydroxy-2,3-dihydrobenzoate + NAD(+) = 2,3-dihydroxybenzoate + NADH + H(+). It participates in siderophore biosynthesis; vibriobactin biosynthesis. Its function is as follows. Involved in an early step of the biosynthesis of the catechol siderophore vibriobactin. Vibriobactin is a chelating compound involved in transporting iron from the bacterial environment into the cell cytoplasm. The sequence is that of Vibriobactin-specific 2,3-dihydro-2,3-dihydroxybenzoate dehydrogenase (vibA) from Vibrio cholerae serotype O1 (strain ATCC 39315 / El Tor Inaba N16961).